A 179-amino-acid chain; its full sequence is MGSLPEKDFPQVHRFITTHKEDGTPTFETKIPEPIEWERTNIGVDFFLAYTLGSFPAPLSHDADLNQYKDHLVNHPPFMIPGGAVVRYVDYHPGCEPMWHRTVTVDFGVVIEGELELEVEGGEKRLMKRGDVAVQRGTNHCWRNPSKTQFARALYIALDAKPVIVNGQELGESLGEVKH.

The Cupin type-2 domain maps to 88-148 (YVDYHPGCEP…NHCWRNPSKT (61 aa)).

Belongs to the oryJ family.

Its pathway is secondary metabolite biosynthesis. Part of the gene cluster that mediates the biosynthesis of oryzines, natural products with an unusual maleidride backbone. The two subunits of the fungal fatty acid synthase oryfasA and oryfasB probably form octenoic acid. This fatty acid is most likely activated by the acyl-CoA ligase oryP to give octenyl-CoA before the citrate synthase-like protein oryE catalyzes condensation with oxaloacetate to form tricarboxylic acid. The next steps of the pathways are conjectural, but a favorite possible route has been proposed, beginning with decarboxylation and concomitant dehydration by the decarboxylase oryM, followed by tautomerization, which may lead to the production of a diene intermediate. Reduction of this diene intermediate could give the known metabolite piliformic acid. On the pathway to oryzine B and oryzine A, however, hydroxylation of the diene by the alpha-ketoglutarate-dependent dioxygenase oryG and lactonisation by the lactonohydrolases oryH or oryL could give oryzine B directly. Finally, enoyl reduction by the dehydrogenase oryD would then convert oryzine B into oryzine A. The sequence is that of Oryzines biosynthesis cluster protein J from Aspergillus oryzae (strain ATCC 42149 / RIB 40) (Yellow koji mold).